We begin with the raw amino-acid sequence, 960 residues long: Isoleucine--tRNA ligase (960 aa).

Residues 60 to 70 carry the 'HIGH' region motif; that stretch reads PYANGSLHIGH. Residue E573 participates in L-isoleucyl-5'-AMP binding. Residues 614 to 618 carry the 'KMSKS' region motif; it reads KMSKS. Residue K617 participates in ATP binding. Residues C929, C932, C949, and C952 each coordinate Zn(2+).

Belongs to the class-I aminoacyl-tRNA synthetase family. IleS type 1 subfamily. Monomer. It depends on Zn(2+) as a cofactor.

It is found in the cytoplasm. The catalysed reaction is tRNA(Ile) + L-isoleucine + ATP = L-isoleucyl-tRNA(Ile) + AMP + diphosphate. Its function is as follows. Catalyzes the attachment of isoleucine to tRNA(Ile). As IleRS can inadvertently accommodate and process structurally similar amino acids such as valine, to avoid such errors it has two additional distinct tRNA(Ile)-dependent editing activities. One activity is designated as 'pretransfer' editing and involves the hydrolysis of activated Val-AMP. The other activity is designated 'posttransfer' editing and involves deacylation of mischarged Val-tRNA(Ile). This chain is Isoleucine--tRNA ligase, found in Nostoc sp. (strain PCC 7120 / SAG 25.82 / UTEX 2576).